Consider the following 313-residue polypeptide: Zinc transporter ZitB (313 aa).

The Cytoplasmic segment spans residues 1–20; it reads MAHSHSHTSSHLPEDNNARR. The chain crosses the membrane as a helical span at residues 21-41; sequence LLYAFGVTAGFMLVEVVGGFL. Residues 42-47 lie on the Periplasmic side of the membrane; that stretch reads SGSLAL. A helical membrane pass occupies residues 48–68; it reads LADAGHMLTDTAALLFALLAV. The Cytoplasmic segment spans residues 69–89; it reads QFSRRPPTIRHTFGWLRLTTL. A helical membrane pass occupies residues 90-110; that stretch reads AAFVNAIALVVITILIVWEAI. Over 111-121 the chain is Periplasmic; it reads ERFRTPRPVEG. A helical transmembrane segment spans residues 122 to 142; the sequence is GMMMAIAVAGLLANILSFWLL. Residues 143-159 lie on the Cytoplasmic side of the membrane; the sequence is HHGSEEKNLNVRAAALH. The helical transmembrane segment at 160-180 threads the bilayer; sequence VLGDLLGSVGAIIAALIIIWT. Gly-181 is a topological domain (periplasmic). Residues 182–202 form a helical membrane-spanning segment; it reads WTPADPILSILVSLLVLRSAW. At 203–313 the chain is on the cytoplasmic side; it reads RLLKDSVNEL…GVSGHSHHHH (111 aa).

This sequence belongs to the cation diffusion facilitator (CDF) transporter (TC 2.A.4) family. SLC30A subfamily.

The protein resides in the cell inner membrane. In terms of biological role, involved in zinc efflux across the cytoplasmic membrane, thus reducing zinc accumulation in the cytoplasm and rendering bacteria more resistant to zinc. It may contribute to zinc homeostasis at low concentrations of zinc. This Shigella flexneri protein is Zinc transporter ZitB (zitB).